Here is a 337-residue protein sequence, read N- to C-terminus: Ketol-acid reductoisomerase (NADP(+)) (337 aa).

Positions 3 to 183 (VEMFYDDDAD…GGTRAGVIKT (181 aa)) constitute a KARI N-terminal Rossmann domain. NADP(+) is bound by residues 26–29 (YGSQ), K49, S52, S54, and 84–87 (DTAQ). The active site involves H109. NADP(+) is bound at residue G135. Residues 184–329 (TFKEETETDL…KKLRDLMSWV (146 aa)) enclose the KARI C-terminal knotted domain. Residues D192, E196, E228, and E232 each coordinate Mg(2+). Residue S253 participates in substrate binding.

Belongs to the ketol-acid reductoisomerase family. Mg(2+) serves as cofactor.

The catalysed reaction is (2R)-2,3-dihydroxy-3-methylbutanoate + NADP(+) = (2S)-2-acetolactate + NADPH + H(+). It carries out the reaction (2R,3R)-2,3-dihydroxy-3-methylpentanoate + NADP(+) = (S)-2-ethyl-2-hydroxy-3-oxobutanoate + NADPH + H(+). It participates in amino-acid biosynthesis; L-isoleucine biosynthesis; L-isoleucine from 2-oxobutanoate: step 2/4. It functions in the pathway amino-acid biosynthesis; L-valine biosynthesis; L-valine from pyruvate: step 2/4. In terms of biological role, involved in the biosynthesis of branched-chain amino acids (BCAA). Catalyzes an alkyl-migration followed by a ketol-acid reduction of (S)-2-acetolactate (S2AL) to yield (R)-2,3-dihydroxy-isovalerate. In the isomerase reaction, S2AL is rearranged via a Mg-dependent methyl migration to produce 3-hydroxy-3-methyl-2-ketobutyrate (HMKB). In the reductase reaction, this 2-ketoacid undergoes a metal-dependent reduction by NADPH to yield (R)-2,3-dihydroxy-isovalerate. In Rhodococcus jostii (strain RHA1), this protein is Ketol-acid reductoisomerase (NADP(+)).